Here is a 901-residue protein sequence, read N- to C-terminus: Protein translocase subunit SecA (901 aa).

Residues Q85, 103-107, and D510 contribute to the ATP site; that span reads GEGKT. The tract at residues 848 to 901 is disordered; sequence RINQNNLPVDENSQTTQNSETEDYSDRRIGRNEPCPCGSGKKYKHCHGSRVARQ. Polar residues predominate over residues 849–866; it reads INQNNLPVDENSQTTQNS. Zn(2+) contacts are provided by C882, C884, C893, and H894. Residues 888–901 are compositionally biased toward basic residues; the sequence is KKYKHCHGSRVARQ.

The protein belongs to the SecA family. Monomer and homodimer. Part of the essential Sec protein translocation apparatus which comprises SecA, SecYEG and auxiliary proteins SecDF-YajC and YidC. Forms a complex with SecB. It depends on Zn(2+) as a cofactor.

The protein resides in the cell inner membrane. It localises to the cytoplasm. It carries out the reaction ATP + H2O + cellular proteinSide 1 = ADP + phosphate + cellular proteinSide 2.. Part of the Sec protein translocase complex. Interacts with the SecYEG preprotein conducting channel. Has a central role in coupling the hydrolysis of ATP to the transfer of proteins into and across the cell membrane, serving both as a receptor for the preprotein-SecB complex and as an ATP-driven molecular motor driving the stepwise translocation of polypeptide chains across the membrane. The protein is Protein translocase subunit SecA of Haemophilus influenzae (strain ATCC 51907 / DSM 11121 / KW20 / Rd).